The following is a 247-amino-acid chain: Probable enoyl-CoA hydratase echA6 (247 aa).

This sequence belongs to the enoyl-CoA hydratase/isomerase family.

It catalyses the reaction a (3S)-3-hydroxyacyl-CoA = a (2E)-enoyl-CoA + H2O. It carries out the reaction a 4-saturated-(3S)-3-hydroxyacyl-CoA = a (3E)-enoyl-CoA + H2O. Could possibly oxidize fatty acids using specific components. The sequence is that of Probable enoyl-CoA hydratase echA6 (echA6) from Mycobacterium leprae (strain TN).